A 476-amino-acid chain; its full sequence is 3-isopropylmalate dehydratase large subunit (476 aa).

3 residues coordinate [4Fe-4S] cluster: C353, C413, and C416.

The protein belongs to the aconitase/IPM isomerase family. LeuC type 1 subfamily. In terms of assembly, heterodimer of LeuC and LeuD. [4Fe-4S] cluster is required as a cofactor.

It carries out the reaction (2R,3S)-3-isopropylmalate = (2S)-2-isopropylmalate. It functions in the pathway amino-acid biosynthesis; L-leucine biosynthesis; L-leucine from 3-methyl-2-oxobutanoate: step 2/4. Functionally, catalyzes the isomerization between 2-isopropylmalate and 3-isopropylmalate, via the formation of 2-isopropylmaleate. The polypeptide is 3-isopropylmalate dehydratase large subunit (Yersinia pseudotuberculosis serotype O:1b (strain IP 31758)).